Here is a 197-residue protein sequence, read N- to C-terminus: Large ribosomal subunit protein bL17 (197 aa).

A disordered region spans residues 120–197; sequence DVPPADTGQG…EEEESEEDNT (78 aa). Residues 127–136 show a composition bias toward gly residues; the sequence is GQGGSGGTRR. Residues 159-197 are compositionally biased toward acidic residues; sequence SSDEESESVEEDEATAEEASADAEQGEAEEEEESEEDNT.

This sequence belongs to the bacterial ribosomal protein bL17 family. Part of the 50S ribosomal subunit. Contacts protein L32.

The protein is Large ribosomal subunit protein bL17 of Salinibacter ruber (strain DSM 13855 / M31).